The primary structure comprises 582 residues: V-type ATP synthase alpha chain (582 aa).

231 to 238 (GPFGSGKT) contributes to the ATP binding site.

The protein belongs to the ATPase alpha/beta chains family.

It carries out the reaction ATP + H2O + 4 H(+)(in) = ADP + phosphate + 5 H(+)(out). In terms of biological role, produces ATP from ADP in the presence of a proton gradient across the membrane. The V-type alpha chain is a catalytic subunit. This Deinococcus geothermalis (strain DSM 11300 / CIP 105573 / AG-3a) protein is V-type ATP synthase alpha chain.